Reading from the N-terminus, the 336-residue chain is Nicotinate-nucleotide--dimethylbenzimidazole phosphoribosyltransferase (336 aa).

Glu304 (proton acceptor) is an active-site residue.

Belongs to the CobT family.

The catalysed reaction is 5,6-dimethylbenzimidazole + nicotinate beta-D-ribonucleotide = alpha-ribazole 5'-phosphate + nicotinate + H(+). It participates in nucleoside biosynthesis; alpha-ribazole biosynthesis; alpha-ribazole from 5,6-dimethylbenzimidazole: step 1/2. Its function is as follows. Catalyzes the synthesis of alpha-ribazole-5'-phosphate from nicotinate mononucleotide (NAMN) and 5,6-dimethylbenzimidazole (DMB). The chain is Nicotinate-nucleotide--dimethylbenzimidazole phosphoribosyltransferase from Mesorhizobium japonicum (strain LMG 29417 / CECT 9101 / MAFF 303099) (Mesorhizobium loti (strain MAFF 303099)).